A 255-amino-acid chain; its full sequence is Fasciclin-like arabinogalactan protein 14 (255 aa).

Residues 1–23 (MSSSLTIFFFFFASTFLYTSSNS) form the signal peptide. An FAS1 domain is found at 24-169 (FNITNILNEH…ISVLHISSAI (146 aa)). Residues Asn-25, Asn-99, Asn-125, and Asn-159 are each glycosylated (N-linked (GlcNAc...) asparagine). Residues 179-231 (PTASPLSPVSSPPRPAESPNDDGQDFDEPPSSAPGAAADEPSENAGSANGVSR) form a disordered region. Residues 197-206 (PNDDGQDFDE) show a composition bias toward acidic residues. The span at 222 to 231 (NAGSANGVSR) shows a compositional bias: polar residues. Residue Ser-225 is the site of GPI-anchor amidated serine attachment. The propeptide at 226-255 (ANGVSRNDSQPAFAFTLLMSFIWWFMARLR) is removed in mature form.

This sequence belongs to the fasciclin-like AGP family.

The protein localises to the cell membrane. Functionally, may be a cell surface adhesion protein. This chain is Fasciclin-like arabinogalactan protein 14 (FLA14), found in Arabidopsis thaliana (Mouse-ear cress).